A 142-amino-acid polypeptide reads, in one-letter code: MAP3K7 C-terminal-like protein (142 aa).

In terms of tissue distribution, ubiquitous.

In Mus musculus (Mouse), this protein is MAP3K7 C-terminal-like protein (Map3k7cl).